The following is a 319-amino-acid chain: N-acyl-aromatic-L-amino acid amidohydrolase (carboxylate-forming) (319 aa).

The interval M1–N210 is hydrolytic domain. Zn(2+)-binding residues include H21 and E24. Substrate is bound by residues R63 and N70–R71. H116 is a binding site for Zn(2+). Positions 178 and 288 each coordinate substrate. Residues Q211–A318 form a shielding domain region.

It belongs to the AspA/AstE family. Aspartoacylase subfamily. As to quaternary structure, exists as a mixture of homodimers and homotetramer, both catalytically active. (Microbial infection) Interacts with hepatitis C virus/HCV core protein. Zn(2+) serves as cofactor.

Its subcellular location is the apical cell membrane. It localises to the cytoplasm. The catalysed reaction is an N-acyl-aromatic L-alpha-amino acid + H2O = an aromatic L-alpha-amino acid + a carboxylate. It carries out the reaction an N-acetyl-L-cysteine-S-conjugate + H2O = an S-substituted L-cysteine + acetate. Its function is as follows. Plays an important role in deacetylating mercapturic acids in kidney proximal tubules. Also acts on N-acetyl-aromatic amino acids. The protein is N-acyl-aromatic-L-amino acid amidohydrolase (carboxylate-forming) (ACY3) of Homo sapiens (Human).